A 437-amino-acid chain; its full sequence is MAGGLSQLVAYGAQDVYLTGNPQITFFKTVYRRYTNFAIESIQQTINGSVGFGNKVSTQISRNGDLITDIVVEFVLTKGGNGGTTYYPAEELLQDVELEIGGQRIDKHYNDWFRTYDALFRMNDDRYNYRRMTDWVNNELVGAQKRFYVPLIFFFNQTPGLALPLIALQYHEVKLYFTLASQVQGVNYNGSSAIAGAAQPTMSVWVDYIFLDTQERTRFAQLPHEYLIEQLQFTGSETATPSATTQASQNIRLNFNHPTKYLAWNFNNPTNYGQYTALANIPGACSGAGTAAATVTTPDYGNTGTYNEQLAVLDSAKIQLNGQDRFATRKGSYFNKVQPYQSIGGVTPAGVYLYSFALKPAGRQPSGTCNFSRIDNATLSLTYKTCSIDATSPAAVLGNTETVTANTATLLTALNIYAKNYNVLRIMSGMGGLAYAN.

N-linked (Glc...) asparagine; by host glycosylation is found at N280, N302, N399, and N406.

This sequence belongs to the NCLDV major capsid protein family. In terms of processing, myristoylated at the C-terminus. Post-translationally, glycosylated; highly branched oligosaccharides. The pattern of glycosylation sites are unusual.

The protein localises to the virion. Its function is as follows. Major capsid protein self-assembles to form an icosahedral capsid with a pseudo T=169 symmetry, about 190 nm in diameter, and consisting of 1680 major capsid proteins trimers. The capsid consists in 5040 copies of the major capsid protein (hexamers), 60 copies of the penton protein (pentamers) and 1800 minor capsid proteins of different types. The minor capsid proteins form a hexagonal network below the outer capsid shell, stabilizing the capsid by binding neighboring capsomers together. This is Major capsid protein from Chlorella (PBCV-1).